The primary structure comprises 295 residues: Indole-3-glycerol phosphate synthase (295 aa).

The protein belongs to the TrpC family.

The enzyme catalyses 1-(2-carboxyphenylamino)-1-deoxy-D-ribulose 5-phosphate + H(+) = (1S,2R)-1-C-(indol-3-yl)glycerol 3-phosphate + CO2 + H2O. The protein operates within amino-acid biosynthesis; L-tryptophan biosynthesis; L-tryptophan from chorismate: step 4/5. The protein is Indole-3-glycerol phosphate synthase of Prochlorococcus marinus (strain AS9601).